The following is a 527-amino-acid chain: RUS family member 1 (527 aa).

Residue asparagine 21 is glycosylated (N-linked (GlcNAc...) asparagine). The helical transmembrane segment at 220–240 threads the bilayer; it reads SQETAVNLVGMLLSVIVSSFI. The N-linked (GlcNAc...) asparagine glycan is linked to asparagine 243. A helical transmembrane segment spans residues 245-265; that stretch reads SLIVTWLVFLFFTSLHLFCNY. N-linked (GlcNAc...) asparagine glycosylation is present at asparagine 346. The segment at 350-426 is disordered; sequence TKNVNNNNNN…NNNNNNNNNK (77 aa). 2 N-linked (GlcNAc...) asparagine glycosylation sites follow: asparagine 467 and asparagine 497.

This sequence belongs to the RUS1 family.

It localises to the membrane. In Dictyostelium discoideum (Social amoeba), this protein is RUS family member 1 (rusf1).